Consider the following 253-residue polypeptide: Short chain dehydrogenase ple7 (253 aa).

A helical transmembrane segment spans residues 5–25 (IVIVTGASHGIGLATVNLLLA). NADP(+)-binding residues include valine 8, arginine 116, tyrosine 148, lysine 152, and asparagine 184. The active-site Proton acceptor is tyrosine 148. The active-site Lowers pKa of active site Tyr is the lysine 152. Asparagine 187 is a glycosylation site (N-linked (GlcNAc...) asparagine).

It belongs to the short-chain dehydrogenases/reductases (SDR) family.

It localises to the membrane. It functions in the pathway secondary metabolite biosynthesis; terpenoid biosynthesis. Functionally, short chain dehydrogenase; part of the gene cluster that mediates the biosynthesis of pleuromutilin, a tricyclic diterpene showing antibacterial properties. The geranylgeranyl diphosphate (GGPP) synthase ple4 catalyzes the first step in pleuromutilin biosynthesis. GGPP is then substrate of the premutilin synthase (PS) ple3 to yield premutilin. Premutilin synthase is a bifunctional enzyme composed of the fusion of a class II diterpene cyclase (DTC) and a class I diterpene synthase (DTS), with the corresponding domains and active sites containing characteristic aspartate-rich motifs. GGPP is first converted to mutildienyl-diphosphate (MPP) at the class II DTC site. MPP is subsequently further cyclized at the class I DTS site, followed by a 1,5-hydride shift and addition of water prior to terminating deprotonation, to yield premutilin. The cytochrome P450 monooxygenases ple5 and ple6 hydroxylate premutilin at C-11 and C-3, respectively, producing 11-hydroxypremutilin and 3-hydroxypremutilin. The combination of the actions of both ple5 and ple6 leads to the production of 3,11-dihydroxypremutilin. The short chain dehydrogenase ple7 further converts 3,11-dihydroxypremutilin into mutilin. The acetyltransferase ple2 then acetylates mutilin to produce 14-O-acetylmutilin. Finally, the cytochrome P450 monooxygenase ple1 catalyzes hydroxylation on the alpha position of the acetyl side chain of 14-O-acetylmutilin to yield pleuromutilin. In Rhodocybe pseudopiperita (Clitopilus pseudopiperitus), this protein is Short chain dehydrogenase ple7.